A 400-amino-acid polypeptide reads, in one-letter code: Exodeoxyribonuclease 7 large subunit (400 aa).

Belongs to the XseA family. In terms of assembly, heterooligomer composed of large and small subunits.

It localises to the cytoplasm. It carries out the reaction Exonucleolytic cleavage in either 5'- to 3'- or 3'- to 5'-direction to yield nucleoside 5'-phosphates.. Bidirectionally degrades single-stranded DNA into large acid-insoluble oligonucleotides, which are then degraded further into small acid-soluble oligonucleotides. This chain is Exodeoxyribonuclease 7 large subunit, found in Clostridium perfringens (strain 13 / Type A).